The sequence spans 160 residues: CXXC motif containing zinc binding protein (160 aa).

Residues Cys-33, Cys-36, Cys-67, and Cys-70 each coordinate Zn(2+).

It belongs to the UPF0587 family.

This is CXXC motif containing zinc binding protein (czib) from Xenopus laevis (African clawed frog).